A 372-amino-acid polypeptide reads, in one-letter code: Anhydro-N-acetylmuramic acid kinase (372 aa).

ATP is bound at residue 12–19; the sequence is GTSMDALD.

This sequence belongs to the anhydro-N-acetylmuramic acid kinase family.

It catalyses the reaction 1,6-anhydro-N-acetyl-beta-muramate + ATP + H2O = N-acetyl-D-muramate 6-phosphate + ADP + H(+). The protein operates within amino-sugar metabolism; 1,6-anhydro-N-acetylmuramate degradation. Its pathway is cell wall biogenesis; peptidoglycan recycling. Catalyzes the specific phosphorylation of 1,6-anhydro-N-acetylmuramic acid (anhMurNAc) with the simultaneous cleavage of the 1,6-anhydro ring, generating MurNAc-6-P. Is required for the utilization of anhMurNAc either imported from the medium or derived from its own cell wall murein, and thus plays a role in cell wall recycling. The polypeptide is Anhydro-N-acetylmuramic acid kinase (Coxiella burnetii (strain CbuK_Q154) (Coxiella burnetii (strain Q154))).